A 265-amino-acid polypeptide reads, in one-letter code: Energy-coupling factor transporter ATP-binding protein EcfA1 (265 aa).

Residues 2 to 236 (IKIKNLVFRY…KEIVELAKID (235 aa)) enclose the ABC transporter domain. An ATP-binding site is contributed by 36–43 (GHNGSGKS).

It belongs to the ABC transporter superfamily. Energy-coupling factor EcfA family. Forms a stable energy-coupling factor (ECF) transporter complex composed of 2 membrane-embedded substrate-binding proteins (S component), 2 ATP-binding proteins (A component) and 2 transmembrane proteins (T component).

It is found in the cell membrane. Functionally, ATP-binding (A) component of a common energy-coupling factor (ECF) ABC-transporter complex. Unlike classic ABC transporters this ECF transporter provides the energy necessary to transport a number of different substrates. This Mycoplasmopsis pulmonis (strain UAB CTIP) (Mycoplasma pulmonis) protein is Energy-coupling factor transporter ATP-binding protein EcfA1.